A 1037-amino-acid polypeptide reads, in one-letter code: Probable inorganic carbon transporter subunit DabA 2 (1037 aa).

Residues Cys460, Asp462, His719, and Cys734 each contribute to the Zn(2+) site.

This sequence belongs to the inorganic carbon transporter (TC 9.A.2) DabA family. In terms of assembly, forms a complex with DabB. Requires Zn(2+) as cofactor.

It localises to the cell inner membrane. Functionally, part of an energy-coupled inorganic carbon pump. In Nitrobacter winogradskyi (strain ATCC 25391 / DSM 10237 / CIP 104748 / NCIMB 11846 / Nb-255), this protein is Probable inorganic carbon transporter subunit DabA 2.